A 636-amino-acid chain; its full sequence is Basic helix-loop-helix ARNT-like protein 2 (636 aa).

Residues 25 to 62 (VSSRVSPGTRPTAMGSFSSHMTEFPRKRKGSDSDPSQS) are disordered. An interaction with PER2 region spans residues 46 to 258 (TEFPRKRKGS…SPREKLIDAK (213 aa)). The short motif at 49–54 (PRKRKG) is the Nuclear localization signal element. The region spanning 107–160 (AFREAHSQTEKRRRDKMNNLIEELSAMIPQCNPMARKLDKLTVLRMAVQHLRSL) is the bHLH domain. The short motif at 177-187 (LQDNELRHLIL) is the Nuclear export signal 1 element. Positions 178 to 250 (QDNELRHLIL…EQLSSFDISP (73 aa)) constitute a PAS 1 domain. Lys-287 participates in a covalent cross-link: Glycyl lysine isopeptide (Lys-Gly) (interchain with G-Cter in SUMO2 and SUMO3). A Glycyl lysine isopeptide (Lys-Gly) (interchain with G-Cter in SUMO2) cross-link involves residue Lys-294. Residues 357-427 (VPQNSGEINV…DKHKAVLQSK (71 aa)) form the PAS 2 domain. The Nuclear export signal 2 signature appears at 392-400 (LGYLPQELL). The region spanning 432-475 (TDSYKFRAKDGSFVTLKSQWFSFTNPWTKELEYIVSVNTLVLGH) is the PAC domain.

Component of the circadian core oscillator, which includes the CRY proteins, CLOCK, or NPAS2, BMAL1 or BMAL2, CSNK1D and/or CSNK1E, TIMELESS and the PER proteins. Interacts directly with CLOCK to form the BMAL2-CLOCK transactivator. Can form heterodimers or homodimers which interact directly with CLOCK to form the transcription activator. Interacts with NPAS2 and HIF1A. Interacts with PER2. Expressed in fetal brain. Highly expressed in brain and placenta. Lower levels in heart, liver, thymus, kidney and lung. Located to endothelial cells and neuronal cells of the suprachiasmatic nucleus (SCN). Also detected in endothelial cells of the heart, lung and kidney. In the brain, specifically expressed in the thalamus, hippocampus and amygdala.

Its subcellular location is the nucleus. Transcriptional activator which forms a core component of the circadian clock. The circadian clock, an internal time-keeping system, regulates various physiological processes through the generation of approximately 24 hour circadian rhythms in gene expression, which are translated into rhythms in metabolism and behavior. It is derived from the Latin roots 'circa' (about) and 'diem' (day) and acts as an important regulator of a wide array of physiological functions including metabolism, sleep, body temperature, blood pressure, endocrine, immune, cardiovascular, and renal function. Consists of two major components: the central clock, residing in the suprachiasmatic nucleus (SCN) of the brain, and the peripheral clocks that are present in nearly every tissue and organ system. Both the central and peripheral clocks can be reset by environmental cues, also known as Zeitgebers (German for 'timegivers'). The predominant Zeitgeber for the central clock is light, which is sensed by retina and signals directly to the SCN. The central clock entrains the peripheral clocks through neuronal and hormonal signals, body temperature and feeding-related cues, aligning all clocks with the external light/dark cycle. Circadian rhythms allow an organism to achieve temporal homeostasis with its environment at the molecular level by regulating gene expression to create a peak of protein expression once every 24 hours to control when a particular physiological process is most active with respect to the solar day. Transcription and translation of core clock components (CLOCK, NPAS2, BMAL1, BMAL2, PER1, PER2, PER3, CRY1 and CRY2) plays a critical role in rhythm generation, whereas delays imposed by post-translational modifications (PTMs) are important for determining the period (tau) of the rhythms (tau refers to the period of a rhythm and is the length, in time, of one complete cycle). A diurnal rhythm is synchronized with the day/night cycle, while the ultradian and infradian rhythms have a period shorter and longer than 24 hours, respectively. Disruptions in the circadian rhythms contribute to the pathology of cardiovascular diseases, cancer, metabolic syndromes and aging. A transcription/translation feedback loop (TTFL) forms the core of the molecular circadian clock mechanism. Transcription factors, CLOCK or NPAS2 and BMAL1 or BMAL2, form the positive limb of the feedback loop, act in the form of a heterodimer and activate the transcription of core clock genes and clock-controlled genes (involved in key metabolic processes), harboring E-box elements (5'-CACGTG-3') within their promoters. The core clock genes: PER1/2/3 and CRY1/2 which are transcriptional repressors form the negative limb of the feedback loop and interact with the CLOCK|NPAS2-BMAL1|BMAL2 heterodimer inhibiting its activity and thereby negatively regulating their own expression. This heterodimer also activates nuclear receptors NR1D1/2 and RORA/B/G, which form a second feedback loop and which activate and repress BMAL1 transcription, respectively. The CLOCK-BMAL2 heterodimer activates the transcription of SERPINE1/PAI1 and BHLHE40/DEC1. This is Basic helix-loop-helix ARNT-like protein 2 from Homo sapiens (Human).